A 67-amino-acid polypeptide reads, in one-letter code: ATP synthase protein 8 (67 aa).

Residues 8 to 24 form a helical membrane-spanning segment; the sequence is TWFITILATILTLFIIM. Position 54 is an N6-acetyllysine; alternate (K54). K54 carries the post-translational modification N6-succinyllysine; alternate. The residue at position 57 (K57) is an N6-acetyllysine.

It belongs to the ATPase protein 8 family. In terms of assembly, F-type ATPases have 2 components, CF(1) - the catalytic core - and CF(0) - the membrane proton channel. Component of an ATP synthase complex composed of ATP5PB, ATP5MC1, ATP5F1E, ATP5PD, ATP5ME, ATP5PF, ATP5MF, MT-ATP6, MT-ATP8, ATP5F1A, ATP5F1B, ATP5F1D, ATP5F1C, ATP5PO, ATP5MG, ATP5MK and ATP5MJ. Interacts with PRICKLE3.

The protein localises to the mitochondrion membrane. Functionally, mitochondrial membrane ATP synthase (F(1)F(0) ATP synthase or Complex V) produces ATP from ADP in the presence of a proton gradient across the membrane which is generated by electron transport complexes of the respiratory chain. F-type ATPases consist of two structural domains, F(1) - containing the extramembraneous catalytic core and F(0) - containing the membrane proton channel, linked together by a central stalk and a peripheral stalk. During catalysis, ATP synthesis in the catalytic domain of F(1) is coupled via a rotary mechanism of the central stalk subunits to proton translocation. Part of the complex F(0) domain. Minor subunit located with subunit a in the membrane. The chain is ATP synthase protein 8 (MT-ATP8) from Artibeus jamaicensis (Jamaican fruit-eating bat).